The following is an 89-amino-acid chain: Small ribosomal subunit protein uS14 (89 aa).

The interval 32-51 (DYEGLQKLPKNSSPVRLHNR) is disordered.

It belongs to the universal ribosomal protein uS14 family. As to quaternary structure, part of the 30S ribosomal subunit. Contacts proteins S3 and S10.

Binds 16S rRNA, required for the assembly of 30S particles and may also be responsible for determining the conformation of the 16S rRNA at the A site. This chain is Small ribosomal subunit protein uS14, found in Christiangramia forsetii (strain DSM 17595 / CGMCC 1.15422 / KT0803) (Gramella forsetii).